The chain runs to 88 residues: Small ribosomal subunit protein uS15 (88 aa).

This sequence belongs to the universal ribosomal protein uS15 family. Part of the 30S ribosomal subunit. Forms a bridge to the 50S subunit in the 70S ribosome, contacting the 23S rRNA.

Its function is as follows. One of the primary rRNA binding proteins, it binds directly to 16S rRNA where it helps nucleate assembly of the platform of the 30S subunit by binding and bridging several RNA helices of the 16S rRNA. Functionally, forms an intersubunit bridge (bridge B4) with the 23S rRNA of the 50S subunit in the ribosome. The sequence is that of Small ribosomal subunit protein uS15 from Caldanaerobacter subterraneus subsp. tengcongensis (strain DSM 15242 / JCM 11007 / NBRC 100824 / MB4) (Thermoanaerobacter tengcongensis).